The chain runs to 970 residues: Serine/threonine-protein kinase PLK4 (970 aa).

Positions phenylalanine 12 to methionine 265 constitute a Protein kinase domain. Residues leucine 18 to valine 26 and lysine 41 each bind ATP. 2 positions are modified to N6-acetyllysine: lysine 45 and lysine 46. Residue aspartate 136 is the Proton acceptor of the active site. The segment at valine 324 to leucine 373 is disordered. A compositionally biased stretch (low complexity) spans lysine 327–phenylalanine 343. The span at tyrosine 344–glycine 356 shows a compositional bias: polar residues. The span at valine 360–histidine 369 shows a compositional bias: basic and acidic residues. A Phosphoserine modification is found at serine 401. Residues isoleucine 498–proline 540 form a disordered region. Residues phenylalanine 504–serine 515 are compositionally biased toward basic and acidic residues. The span at alanine 530–proline 540 shows a compositional bias: polar residues. In terms of domain architecture, Cryptic POLO box 1 (CPB1) spans threonine 586–lysine 699. At serine 665 the chain carries Phosphoserine. The 114-residue stretch at serine 700–proline 813 folds into the Cryptic POLO box 2 (CPB2) domain. Residues glycine 808–arginine 829 are disordered. Serine 817 is subject to Phosphoserine. In terms of domain architecture, POLO box spans glutamine 886–asparagine 964.

This sequence belongs to the protein kinase superfamily. Ser/Thr protein kinase family. CDC5/Polo subfamily. Homodimer. Interacts with CEP152 (via N-terminus). Interacts with CEP78; this interaction may be important for proper PLK4 localization to the centriole and PLK4-induced overduplication of centrioles. Interacts with CEP131. Interacts simultaneously with TENT5C and CEP192. Interacts with TENT5C; this interaction leads to the TENT5C recruitment in the centrosome. Interacts with CEP85; this interaction may be important in cell migration and centriole assembly. Post-translationally, ubiquitinated; leading to its degradation by the proteasome. Deubiquitinated by USP54; leading to PLK4 stabilization. Tyrosine-phosphorylated by TEC. In terms of processing, acetylation by KAT2A and KAT2B impairs kinase activity by shifting the kinase to an inactive conformation.

It is found in the cytoplasm. The protein resides in the cytoskeleton. The protein localises to the microtubule organizing center. Its subcellular location is the centrosome. It localises to the centriole. It is found in the nucleus. The protein resides in the nucleolus. The protein localises to the cleavage furrow. The catalysed reaction is L-seryl-[protein] + ATP = O-phospho-L-seryl-[protein] + ADP + H(+). The enzyme catalyses L-threonyl-[protein] + ATP = O-phospho-L-threonyl-[protein] + ADP + H(+). In terms of biological role, serine/threonine-protein kinase that plays a central role in centriole duplication. Able to trigger procentriole formation on the surface of the parental centriole cylinder, leading to the recruitment of centriole biogenesis proteins such as SASS6, CPAP, CCP110, CEP135 and gamma-tubulin. When overexpressed, it is able to induce centrosome amplification through the simultaneous generation of multiple procentrioles adjoining each parental centriole during S phase. Phosphorylates 'Ser-151' of FBXW5 during the G1/S transition, leading to inhibit FBXW5 ability to ubiquitinate SASS6. Its central role in centriole replication suggests a possible role in tumorigenesis, centrosome aberrations being frequently observed in tumors. Also involved in deuterosome-mediated centriole amplification in multiciliated that can generate more than 100 centrioles. Also involved in trophoblast differentiation by phosphorylating HAND1, leading to disrupt the interaction between HAND1 and MDFIC and activate HAND1. Phosphorylates CDC25C and CHEK2. Required for the recruitment of STIL to the centriole and for STIL-mediated centriole amplification. Phosphorylates CEP131 and PCM1 which is essential for proper organization and integrity of centriolar satellites. The chain is Serine/threonine-protein kinase PLK4 from Pongo abelii (Sumatran orangutan).